The sequence spans 218 residues: Large ribosomal subunit protein bL25 (218 aa).

The disordered stretch occupies residues 186–218 (AVEEEVPAEDEEIMPEPEVIGEEDEGDEEEPEE).

The protein belongs to the bacterial ribosomal protein bL25 family. CTC subfamily. In terms of assembly, part of the 50S ribosomal subunit; part of the 5S rRNA/L5/L18/L25 subcomplex. Contacts the 5S rRNA. Binds to the 5S rRNA independently of L5 and L18.

Its function is as follows. This is one of the proteins that binds to the 5S RNA in the ribosome where it forms part of the central protuberance. This is Large ribosomal subunit protein bL25 from Halothermothrix orenii (strain H 168 / OCM 544 / DSM 9562).